A 232-amino-acid polypeptide reads, in one-letter code: Glycerol-3-phosphate acyltransferase 4 (232 aa).

The next 6 helical transmembrane spans lie at 4–24 (VFLI…AYLL), 54–76 (LGLA…AGWL), 80–99 (LWQQ…WPVF), 107–127 (GIAT…LIAL), 143–163 (VFLG…FFGV), and 168–188 (TVTW…LMAP).

It belongs to the PlsY family. As to quaternary structure, probably interacts with PlsX.

It is found in the cell membrane. The catalysed reaction is an acyl phosphate + sn-glycerol 3-phosphate = a 1-acyl-sn-glycero-3-phosphate + phosphate. It functions in the pathway lipid metabolism; phospholipid metabolism. Functionally, catalyzes the transfer of an acyl group from acyl-phosphate (acyl-PO(4)) to glycerol-3-phosphate (G3P) to form lysophosphatidic acid (LPA). This enzyme utilizes acyl-phosphate as fatty acyl donor, but not acyl-CoA or acyl-ACP. This Dehalococcoides mccartyi (strain CBDB1) protein is Glycerol-3-phosphate acyltransferase 4.